The primary structure comprises 89 residues: Large ribosomal subunit protein bL28 (89 aa).

The protein belongs to the bacterial ribosomal protein bL28 family.

This is Large ribosomal subunit protein bL28 from Chlamydia trachomatis serovar A (strain ATCC VR-571B / DSM 19440 / HAR-13).